Here is a 144-residue protein sequence, read N- to C-terminus: Ribonuclease H (144 aa).

In terms of domain architecture, RNase H type-1 spans 1–136 (MKIVTLFSDG…CDQMARNEAL (136 aa)). The Mg(2+) site is built by D9, E47, D69, and D128.

Belongs to the RNase H family. In terms of assembly, monomer. Mg(2+) is required as a cofactor.

The protein localises to the cytoplasm. It catalyses the reaction Endonucleolytic cleavage to 5'-phosphomonoester.. Functionally, endonuclease that specifically degrades the RNA of RNA-DNA hybrids. The protein is Ribonuclease H of Campylobacter concisus (strain 13826).